A 480-amino-acid chain; its full sequence is UDP-N-acetylmuramoyl-L-alanyl-D-glutamate--2,6-diaminopimelate ligase (480 aa).

A UDP-N-acetyl-alpha-D-muramoyl-L-alanyl-D-glutamate-binding site is contributed by serine 21. Glycine 98–serine 104 contributes to the ATP binding site. Residues threonine 144 to threonine 145, serine 171, glutamine 177, and arginine 179 each bind UDP-N-acetyl-alpha-D-muramoyl-L-alanyl-D-glutamate. At lysine 211 the chain carries N6-carboxylysine. Meso-2,6-diaminopimelate contacts are provided by residues arginine 372, aspartate 396–arginine 399, glycine 446, and glutamate 450. A Meso-diaminopimelate recognition motif motif is present at residues aspartate 396–arginine 399.

The protein belongs to the MurCDEF family. MurE subfamily. Requires Mg(2+) as cofactor. Post-translationally, carboxylation is probably crucial for Mg(2+) binding and, consequently, for the gamma-phosphate positioning of ATP.

The protein resides in the cytoplasm. It catalyses the reaction UDP-N-acetyl-alpha-D-muramoyl-L-alanyl-D-glutamate + meso-2,6-diaminopimelate + ATP = UDP-N-acetyl-alpha-D-muramoyl-L-alanyl-gamma-D-glutamyl-meso-2,6-diaminopimelate + ADP + phosphate + H(+). It functions in the pathway cell wall biogenesis; peptidoglycan biosynthesis. Functionally, catalyzes the addition of meso-diaminopimelic acid to the nucleotide precursor UDP-N-acetylmuramoyl-L-alanyl-D-glutamate (UMAG) in the biosynthesis of bacterial cell-wall peptidoglycan. This is UDP-N-acetylmuramoyl-L-alanyl-D-glutamate--2,6-diaminopimelate ligase from Rickettsia prowazekii (strain Madrid E).